Here is a 128-residue protein sequence, read N- to C-terminus: Large-conductance mechanosensitive channel (128 aa).

2 helical membrane-spanning segments follow: residues 11 to 31 and 70 to 90; these read FALK…AAFG and GAFI…FIFV.

This sequence belongs to the MscL family. As to quaternary structure, homopentamer.

It is found in the cell membrane. Functionally, channel that opens in response to stretch forces in the membrane lipid bilayer. May participate in the regulation of osmotic pressure changes within the cell. In Listeria innocua serovar 6a (strain ATCC BAA-680 / CLIP 11262), this protein is Large-conductance mechanosensitive channel.